The chain runs to 54 residues: Large ribosomal subunit protein bL33A (54 aa).

Belongs to the bacterial ribosomal protein bL33 family.

This Saccharopolyspora erythraea (strain ATCC 11635 / DSM 40517 / JCM 4748 / NBRC 13426 / NCIMB 8594 / NRRL 2338) protein is Large ribosomal subunit protein bL33A.